A 291-amino-acid polypeptide reads, in one-letter code: Protease HtpX homolog (291 aa).

The next 2 membrane-spanning stretches (helical) occupy residues 4 to 24 and 39 to 59; these read ILLFVLTNVAVVAVLGIVASL and GSLLGFALVIGFGGAIISLLI. His144 contacts Zn(2+). Glu145 is a catalytic residue. Residue His148 coordinates Zn(2+). Transmembrane regions (helical) follow at residues 159–179 and 199–219; these read LIQGVMNTFVVFLSRVIAFAI and ITTVVLDIVLGFAAAIVVAWF. Glu224 is a Zn(2+) binding site.

The protein belongs to the peptidase M48B family. It depends on Zn(2+) as a cofactor.

Its subcellular location is the cell inner membrane. In Albidiferax ferrireducens (strain ATCC BAA-621 / DSM 15236 / T118) (Rhodoferax ferrireducens), this protein is Protease HtpX homolog.